Reading from the N-terminus, the 458-residue chain is Probable ECA polymerase (458 aa).

Transmembrane regions (helical) follow at residues 3 to 23, 37 to 57, 65 to 85, 112 to 132, 154 to 174, 180 to 200, 201 to 221, 222 to 242, 340 to 360, 377 to 397, and 409 to 429; these read LAQFGGLFVVYLIGTLFVLTL, VFFSLLYLLTFYFGFPLTCLL, VVPVEFLLYAILSATAFYAIY, THLTWILLALVAIVTVGIFFL, GVALKRFFYFFIPAMLVVYFL, AWFFFLAATVAFGILTYVIVG, GTRANIIIAFSLFLFIGIVRG, WISLWMLVAAGVFGIVGMFWL, LVVMGGALFIPVGAVLVGMII, YKAAILQGFCFGAVFNIIVLA, and VFFCLIFGVCLLMAKLLYWLF.

The protein belongs to the WzyE family. Probably part of a complex composed of WzxE, WzyE and WzzE.

It localises to the cell inner membrane. It functions in the pathway bacterial outer membrane biogenesis; enterobacterial common antigen biosynthesis. Its function is as follows. Probably involved in the polymerization of enterobacterial common antigen (ECA) trisaccharide repeat units. In Serratia proteamaculans (strain 568), this protein is Probable ECA polymerase.